Consider the following 634-residue polypeptide: Dachshund homolog 2 (634 aa).

Residues 76–162 (RMVDMHGVKV…LITRKDFETL (87 aa)) are DACHbox-N. 3 disordered regions span residues 171–194 (RKRQMTRKQAVNSSRPGRPPKRSL), 244–286 (LQGN…SGPQ), and 378–416 (IPESPSPAPSLEESHRPGSQTSSHPSSSVSSSPSQMDHH). A compositionally biased stretch (polar residues) spans 244–269 (LQGNGSQNGTESEPDDLNSTTGGSES). The segment covering 396-412 (SQTSSHPSSSVSSSPSQ) has biased composition (low complexity). Positions 488–568 (SSVETLLTNI…KAKRKLQEAL (81 aa)) are DACHbox-C. Positions 494 to 588 (LTNIQGLLKV…EQALKQATSG (95 aa)) form a coiled coil.

The protein belongs to the DACH/dachshund family. Interacts with SIX6. Interacts with EYA2. Expressed in embryo, and at lower levels in the newborn.

The protein resides in the nucleus. Its function is as follows. Transcription factor that is involved in regulation of organogenesis. Seems to be a regulator for SIX1 and SIX6. Seems to act as a corepressor of SIX6 in regulating proliferation by directly repressing cyclin-dependent kinase inhibitors, including the p27Kip1 promoter. Is recruited with SIX6 to the p27Kip1 promoter in embryonal retina. SIX6 corepression also seems to involve NCOR1, TBL1, HDAC1 and HDAC3. May be involved together with PAX3, SIX1, and EYA2 in regulation of myogenesis. In the developing somite, expression of DACH2 and PAX3 is regulated by the overlying ectoderm, and DACH2 and PAX3 positively regulate each other's expression. Probably binds to DNA via its DACHbox-N domain. This chain is Dachshund homolog 2 (Dach2), found in Mus musculus (Mouse).